A 158-amino-acid polypeptide reads, in one-letter code: MNQEKLAKLQAQVRIGGKGTARRKKKVVHRTATADDKKLQSSLKKLAVNNIAGIEEVNMIKDDGTVIHFNNPKVQASLSANTFAITGHAEAKPITEMLPGILSQLGADSLTSLRKLAEQFPRQVLDSKAPKSEDIDEEDDDVPDLAENFDEASKNEAN.

An NAC-A/B domain is found at T33–L98. Residues V124–N158 are disordered. Residues D134 to D150 show a composition bias toward acidic residues.

It belongs to the NAC-beta family.

This Gallus gallus (Chicken) protein is Transcription factor BTF3 homolog 4 (BTF3L4).